A 375-amino-acid polypeptide reads, in one-letter code: Outer membrane porin C (375 aa).

Positions M1–A21 are cleaved as a signal peptide. Residues A22 to D33 are Periplasmic-facing. Residues L34–H42 form a beta stranded membrane-spanning segment. At Y43–D53 the chain is on the extracellular side. The chain crosses the membrane as a beta stranded span at residues Q54–G63. Residues E64 to G73 are Periplasmic-facing. A beta stranded transmembrane segment spans residues Y74 to N84. Topologically, residues A85–N91 are extracellular. Residues S92–L101 traverse the membrane as a beta stranded segment. The Periplasmic segment spans residues K102–I106. Residues G107–Y115 form a beta stranded membrane-spanning segment. Residues G116 to F141 are Extracellular-facing. The beta stranded transmembrane segment at M142–N154 threads the bilayer. The Periplasmic segment spans residues T155–G163. A beta stranded transmembrane segment spans residues L164–Q171. Topologically, residues G172–G204 are extracellular. Residues V205 to Y211 form a beta stranded membrane-spanning segment. Over D212 to G215 the chain is Periplasmic. Residues F216 to S223 form a beta stranded membrane-spanning segment. At S224–T245 the chain is on the extracellular side. Residues Y246 to Y252 form a beta stranded membrane-spanning segment. Over D253–N256 the chain is Periplasmic. The beta stranded transmembrane segment at I257–T264 threads the bilayer. Residues Q265–G273 lie on the Extracellular side of the membrane. The chain crosses the membrane as a beta stranded span at residues S274–Y290. Residues Q291–G295 lie on the Periplasmic side of the membrane. Residues L296 to L303 form a beta stranded membrane-spanning segment. Residues Q304–Y326 are Extracellular-facing. Residues V327 to Y334 traverse the membrane as a beta stranded segment. Residues F335 to N338 are Periplasmic-facing. A beta stranded membrane pass occupies residues M339–K346. At I347–I366 the chain is on the extracellular side. A beta stranded transmembrane segment spans residues V367–Q374. A topological domain (periplasmic) is located at residue F375.

The protein belongs to the Gram-negative porin family. In terms of assembly, homotrimer. Forms mixed heterotrimers with OmpF; other mixed heterotrimers are also probable.

The protein localises to the cell outer membrane. Forms pores that allow passive diffusion of small molecules across the outer membrane. Its function is as follows. (Microbial infection) Supports colicin E5 entry in the absence of its major receptor OmpF. In terms of biological role, (Microbial infection) A mixed OmpC-OmpF heterotrimer is the outer membrane receptor for toxin CdiA-EC536. The polypeptide is Outer membrane porin C (ompC) (Escherichia coli O6:K15:H31 (strain 536 / UPEC)).